Consider the following 347-residue polypeptide: MSDILSSLAYLTGKPVASAKIKAQPEHFQVREDLGFAFTGEGEHLLVRIRKTGENTSFVANELAKACGVKSKDVSWAGLKDRHAVTEQWLSVHLPKGETPDFSAFLAQHPSIEILATDRHNKKLRPGDLVGNEFVVTLSEVTDVADVEQRLEKVKQVGVPNYFGSQRFGNDGNNLEEASRWGRENVRTRNQNKRSMYLSAARSWIFNRIVSARLENGVFDKFIDGDVAQTASGTQLVDASNMAALQAQFAQGEVAITAALAGDNALPTQADALTLEQPFLDEEPDLMALIRGNRMRHDRRDIALKPQDLAWTVDGNNITMTFSLDAGSFATSIVRELVIEEKVEREY.

Residue Asp81 is the Nucleophile of the active site. Positions 158–305 constitute a TRUD domain; sequence GVPNYFGSQR…RHDRRDIALK (148 aa).

It belongs to the pseudouridine synthase TruD family.

The catalysed reaction is uridine(13) in tRNA = pseudouridine(13) in tRNA. Responsible for synthesis of pseudouridine from uracil-13 in transfer RNAs. This Vibrio campbellii (strain ATCC BAA-1116) protein is tRNA pseudouridine synthase D.